A 312-amino-acid chain; its full sequence is tRNA dimethylallyltransferase (312 aa).

Residue 15-22 (GPTAAGKS) coordinates ATP. 17 to 22 (TAAGKS) is a substrate binding site. The segment at 40–43 (DSMQ) is interaction with substrate tRNA.

Belongs to the IPP transferase family. Monomer. Requires Mg(2+) as cofactor.

The catalysed reaction is adenosine(37) in tRNA + dimethylallyl diphosphate = N(6)-dimethylallyladenosine(37) in tRNA + diphosphate. Its function is as follows. Catalyzes the transfer of a dimethylallyl group onto the adenine at position 37 in tRNAs that read codons beginning with uridine, leading to the formation of N6-(dimethylallyl)adenosine (i(6)A). This is tRNA dimethylallyltransferase from Streptomyces griseus subsp. griseus (strain JCM 4626 / CBS 651.72 / NBRC 13350 / KCC S-0626 / ISP 5235).